The primary structure comprises 235 residues: MSSFQFEQIGVIRSPYKEKFAVPRQPGLVKSANGELHLIAPYNQADAVRGLEAFSHLWILFVFHQTMEGGWRPTVRPPRLGGNARMGVFATRSTFRPNPIGMSLVELKEVVCHKDSVILKLGSLDLVDGTPVVDIKPYLPFAESLPDASASYAQSAPAAEMAVSFTAEVEKQLLTLEKRYPQLTLFIREVLAQDPRPAYRKGEETGKTYAVWLHDFNVRWRVTDAGFEVFALEPR.

Residues 6–147 (FEQIGVIRSP…YLPFAESLPD (142 aa)) enclose the TsaA-like domain. S-adenosyl-L-methionine contacts are provided by residues 23 to 25 (PRQ), 64 to 65 (HQ), R92, and 127 to 130 (VDGT).

It belongs to the tRNA methyltransferase O family. Homodimer.

The enzyme catalyses N(6)-L-threonylcarbamoyladenosine(37) in tRNA + S-adenosyl-L-methionine = N(6)-methyl,N(6)-L-threonylcarbamoyladenosine(37) in tRNA + S-adenosyl-L-homocysteine + H(+). Its function is as follows. S-adenosyl-L-methionine-dependent methyltransferase responsible for the addition of the methyl group in the formation of N6-methyl-N6-threonylcarbamoyladenosine at position 37 (m(6)t(6)A37) of the tRNA anticodon loop of tRNA(Thr)(GGU) that read codons starting with adenosine. The methyl group of m(6)t(6)A37 appears to slightly improve the efficiency of the tRNA decoding ability. The polypeptide is tRNA (adenine(37)-N6)-methyltransferase (Escherichia coli (strain K12)).